The following is a 163-amino-acid chain: Endoribonuclease YbeY (163 aa).

Residues His126, His130, and His136 each coordinate Zn(2+).

This sequence belongs to the endoribonuclease YbeY family. The cofactor is Zn(2+).

The protein localises to the cytoplasm. Its function is as follows. Single strand-specific metallo-endoribonuclease involved in late-stage 70S ribosome quality control and in maturation of the 3' terminus of the 16S rRNA. The protein is Endoribonuclease YbeY of Chelativorans sp. (strain BNC1).